Consider the following 242-residue polypeptide: Small ribosomal subunit protein uS3 (242 aa).

In terms of domain architecture, KH type-2 spans Ile39 to Glu110. A disordered region spans residues Gln216–Gly242. Residues Gln233–Gly242 are compositionally biased toward basic and acidic residues.

Belongs to the universal ribosomal protein uS3 family. In terms of assembly, part of the 30S ribosomal subunit. Forms a tight complex with proteins S10 and S14.

Its function is as follows. Binds the lower part of the 30S subunit head. Binds mRNA in the 70S ribosome, positioning it for translation. In Synechococcus sp. (strain CC9605), this protein is Small ribosomal subunit protein uS3.